A 224-amino-acid chain; its full sequence is MRSELFAYDRFYKQNFGTVIGVDEAGRGCLAGPVVAAAVILEVQLDVFDSKQLTAQKREELFLQIMNSAEVGIGIATPEEIDLYNIFNATKIAMNRALASLNKKDAYVLVDGKSLNLSQQGVCIVKGDEKSASIAAASIVAKVLRDRIMVAHDRIYPCYGFSKHKGYGTVHHLNAIREFGPTVFHRLSFSPVLSNLSVKKVHDLFSENINCERAKVILRKLSSS.

One can recognise an RNase H type-2 domain in the interval 17–201 (GTVIGVDEAG…VLSNLSVKKV (185 aa)). A divalent metal cation contacts are provided by Asp-23, Glu-24, and Asp-111.

It belongs to the RNase HII family. Mn(2+) is required as a cofactor. It depends on Mg(2+) as a cofactor.

It localises to the cytoplasm. It catalyses the reaction Endonucleolytic cleavage to 5'-phosphomonoester.. Functionally, endonuclease that specifically degrades the RNA of RNA-DNA hybrids. The sequence is that of Ribonuclease HII from Pseudothermotoga lettingae (strain ATCC BAA-301 / DSM 14385 / NBRC 107922 / TMO) (Thermotoga lettingae).